We begin with the raw amino-acid sequence, 1356 residues long: Fibronectin type III domain containing protein 3C1 (1356 aa).

Disordered regions lie at residues 303–341 (PRNM…SDNN), 356–402 (TYDE…SDVA), and 428–452 (NQKK…QPGC). A compositionally biased stretch (low complexity) spans 308–341 (DNIPDTNTTDTITSSSAHTPSISTSNATFCSDNN). Residues 370–393 (PSCTSQSASNPSVSENAHNPSSIN) are compositionally biased toward polar residues. The segment covering 439 to 448 (LKEHNTEDRT) has biased composition (basic and acidic residues). Fibronectin type-III domains are found at residues 454 to 549 (NIEK…TPGC), 553 to 648 (PPLA…TPPA), 650 to 741 (LPPK…TRPA), and 745 to 842 (CPNK…TLPP). Residues 825 to 838 (GQSRPSDVLTIQTP) show a composition bias toward polar residues. Positions 825–894 (GQSRPSDVLT…QDRKVHPSSE (70 aa)) are disordered. Residues 883–894 (PHQDRKVHPSSE) show a composition bias toward basic and acidic residues. Fibronectin type-III domains are found at residues 914–1007 (PPSQ…TPGT), 1017–1103 (EVES…TKPL), 1104–1199 (PPEP…TKSP), and 1202–1299 (ALKA…TYKH). The interval 1299–1320 (HHSGHGKGSGSKGKGNHNDKGE) is disordered. The chain crosses the membrane as a helical span at residues 1330 to 1350 (TFVLTLLIGFALIAVLCAVAV). At 1351 to 1356 (QYLLIN) the chain is on the cytoplasmic side.

It belongs to the FNDC3 family.

The protein localises to the membrane. This Mus musculus (Mouse) protein is Fibronectin type III domain containing protein 3C1 (Fndc3c1).